The primary structure comprises 397 residues: Fractalkine (397 aa).

The N-terminal stretch at 1-24 (MAPISLSWLLRLATFCHLTVLLAG) is a signal peptide. A chemokine and involved in interaction with ITGAV:ITGB3 and ITGA4:ITGB1 region spans residues 25 to 100 (QHHGVTKCNI…RQAAALTRNG (76 aa)). Residues 25–341 (QHHGVTKCNI…PDAQAATRRQ (317 aa)) are Extracellular-facing. Disulfide bonds link C32/C58 and C36/C74. N-linked (GlcNAc...) asparagine glycosylation occurs at N33. Positions 101 to 341 (GTFEKQIGEV…PDAQAATRRQ (241 aa)) are mucin-like stalk. 2 disordered regions span residues 128–265 (EPEA…REEM) and 289–309 (VPVS…SWTP). The segment covering 133 to 147 (GESSSLEPTPSSQEA) has biased composition (polar residues). An O-linked (GalNAc...) threonine glycan is attached at T183. Positions 193–202 (TAATWQSSAP) are enriched in polar residues. The segment covering 219–243 (PSTQDPSTQASTASSPAPEENAPSE) has biased composition (low complexity). Residue S253 is glycosylated (O-linked (GalNAc...) serine). T329 carries O-linked (GalNAc...) threonine glycosylation. A helical transmembrane segment spans residues 342-362 (AVGLLAFLGLLFCLGVAMFTY). Over 363–397 (QSLQGCPRKMAGEMAEGLRYIPRSCGSNSYVLVPV) the chain is Cytoplasmic.

It belongs to the intercrine delta family. Monomer. Forms a ternary complex with CX3CR1 and ITGAV:ITGB3 or ITGA4:ITGB1. In terms of assembly, (Microbial infection) Interacts with pox virus crmD; this inhibits cell migration mediated by CX3CL1. As to quaternary structure, (Microbial infection) Interacts (via N-terminus) with human cytomegalovirus (HHV-5) US28. (Microbial infection) Interacts with P.falciparum (strain 3D7) CBP1 and CBP2 (via their extracellular domains); the interaction mediates the adhesion of infected erythrocytes with endothelial cells. In terms of processing, a soluble short 95 kDa form may be released by proteolytic cleavage from the long membrane-anchored form. O-glycosylated with core 1 or possibly core 8 glycans. Expressed in the seminal plasma, endometrial fluid and follicular fluid (at protein level). Small intestine, colon, testis, prostate, heart, brain, lung, skeletal muscle, kidney and pancreas. Most abundant in the brain and heart.

It is found in the cell membrane. The protein resides in the secreted. Chemokine that acts as a ligand for both CX3CR1 and integrins ITGAV:ITGB3 and ITGA4:ITGB1. The CX3CR1-CX3CL1 signaling exerts distinct functions in different tissue compartments, such as immune response, inflammation, cell adhesion and chemotaxis. Regulates leukocyte adhesion and migration processes at the endothelium. Can activate integrins in both a CX3CR1-dependent and CX3CR1-independent manner. In the presence of CX3CR1, activates integrins by binding to the classical ligand-binding site (site 1) in integrins. In the absence of CX3CR1, binds to a second site (site 2) in integrins which is distinct from site 1 and enhances the binding of other integrin ligands to site 1. Its function is as follows. The soluble form is chemotactic for T-cells and monocytes, but not for neutrophils. In terms of biological role, the membrane-bound form promotes adhesion of those leukocytes to endothelial cells. Functionally, (Microbial infection) Mediates the cytoadherence of erythrocytes infected with parasite P.falciparum (strain 3D7) with endothelial cells by interacting with P.falciparum CBP1 and CBP2 expressed at the surface of erythrocytes. The adhesion prevents the elimination of infected erythrocytes by the spleen. This is Fractalkine from Homo sapiens (Human).